The following is a 121-amino-acid chain: Large ribosomal subunit protein uL18 (121 aa).

The protein belongs to the universal ribosomal protein uL18 family. In terms of assembly, part of the 50S ribosomal subunit; part of the 5S rRNA/L5/L18/L25 subcomplex. Contacts the 5S and 23S rRNAs.

Functionally, this is one of the proteins that bind and probably mediate the attachment of the 5S RNA into the large ribosomal subunit, where it forms part of the central protuberance. In Ureaplasma urealyticum serovar 10 (strain ATCC 33699 / Western), this protein is Large ribosomal subunit protein uL18.